An 81-amino-acid polypeptide reads, in one-letter code: Acyl carrier protein (81 aa).

A Carrier domain is found at 1 to 79 (MDREEILQKI…EAVDYVVEHQ (79 aa)). The residue at position 39 (Ser-39) is an O-(pantetheine 4'-phosphoryl)serine.

Belongs to the acyl carrier protein (ACP) family. 4'-phosphopantetheine is transferred from CoA to a specific serine of apo-ACP by AcpS. This modification is essential for activity because fatty acids are bound in thioester linkage to the sulfhydryl of the prosthetic group.

It localises to the cytoplasm. The protein operates within lipid metabolism; fatty acid biosynthesis. In terms of biological role, carrier of the growing fatty acid chain in fatty acid biosynthesis. This is Acyl carrier protein from Rubrobacter xylanophilus (strain DSM 9941 / JCM 11954 / NBRC 16129 / PRD-1).